The following is a 306-amino-acid chain: Glutaminase (306 aa).

Substrate-binding residues include Ser-64, Asn-115, Glu-159, Asn-166, Tyr-190, Tyr-242, and Val-260.

It belongs to the glutaminase family. Homotetramer.

It carries out the reaction L-glutamine + H2O = L-glutamate + NH4(+). The sequence is that of Glutaminase from Aeromonas salmonicida (strain A449).